Here is a 325-residue protein sequence, read N- to C-terminus: Nod factor export ATP-binding protein I (325 aa).

An ABC transporter domain is found at 27-257 (LELRKVRKQY…QIGCDVVEVY (231 aa)). Residue 59–66 (GPNGAGKT) participates in ATP binding.

This sequence belongs to the ABC transporter superfamily. Lipooligosaccharide exporter (TC 3.A.1.102) family. The complex is composed of two ATP-binding proteins (NodI) and two transmembrane proteins (NodJ).

The protein localises to the cell inner membrane. Part of the ABC transporter complex NodIJ involved in the export of the nodulation factors (Nod factors), the bacterial signal molecules that induce symbiosis and subsequent nodulation induction. Nod factors are LCO (lipo-chitin oligosaccharide), a modified beta-1,4-linked N-acetylglucosamine oligosaccharide. This subunit is responsible for energy coupling to the transport system. The sequence is that of Nod factor export ATP-binding protein I from Cupriavidus pinatubonensis (strain JMP 134 / LMG 1197) (Cupriavidus necator (strain JMP 134)).